Reading from the N-terminus, the 394-residue chain is QWRF motif-containing protein 7 (394 aa).

The interval 1–171 is disordered; sequence MATTGRRLRP…ESPVSKAKIR (171 aa). The segment covering 14–67 has biased composition (low complexity); sequence NNNRSRTISSSISLPVSLNASLSSSTSSSSSSSPSNSSKRVMITRSQSTTRSSR. A compositionally biased stretch (polar residues) spans 85 to 96; the sequence is NSASRSQEINNG. A compositionally biased stretch (basic and acidic residues) spans 97 to 110; the sequence is RSRESFARYLEQRT. Polar residues-rich tracts occupy residues 111–120 and 142–157; these read RGSPRSNASS and TMKT…TSMC. The QWRF motif motif lies at 211 to 214; that stretch reads QWRF.

Belongs to the QWRF family.

The protein is QWRF motif-containing protein 7 (QWRF7) of Arabidopsis thaliana (Mouse-ear cress).